A 369-amino-acid chain; its full sequence is DNA replication and repair protein RecF (369 aa).

Residue 30-37 (GDNAQGKT) participates in ATP binding.

Belongs to the RecF family.

It is found in the cytoplasm. Its function is as follows. The RecF protein is involved in DNA metabolism; it is required for DNA replication and normal SOS inducibility. RecF binds preferentially to single-stranded, linear DNA. It also seems to bind ATP. In Streptococcus equi subsp. equi (strain 4047), this protein is DNA replication and repair protein RecF.